The sequence spans 205 residues: N-(5'-phosphoribosyl)anthranilate isomerase (205 aa).

Belongs to the TrpF family.

It carries out the reaction N-(5-phospho-beta-D-ribosyl)anthranilate = 1-(2-carboxyphenylamino)-1-deoxy-D-ribulose 5-phosphate. The protein operates within amino-acid biosynthesis; L-tryptophan biosynthesis; L-tryptophan from chorismate: step 3/5. This Phocaeicola vulgatus (strain ATCC 8482 / DSM 1447 / JCM 5826 / CCUG 4940 / NBRC 14291 / NCTC 11154) (Bacteroides vulgatus) protein is N-(5'-phosphoribosyl)anthranilate isomerase.